A 375-amino-acid polypeptide reads, in one-letter code: N5-carboxyaminoimidazole ribonucleotide synthase (375 aa).

ATP contacts are provided by residues arginine 108, lysine 148, 153–159 (GYDGKGQ), 183–186 (EQYL), glutamate 191, histidine 214, and 266–267 (NE). Residues 112–296 (KQTLLEANTQ…QFDTHILAIT (185 aa)) enclose the ATP-grasp domain.

The protein belongs to the PurK/PurT family. Homodimer.

It catalyses the reaction 5-amino-1-(5-phospho-beta-D-ribosyl)imidazole + hydrogencarbonate + ATP = 5-carboxyamino-1-(5-phospho-D-ribosyl)imidazole + ADP + phosphate + 2 H(+). Its pathway is purine metabolism; IMP biosynthesis via de novo pathway; 5-amino-1-(5-phospho-D-ribosyl)imidazole-4-carboxylate from 5-amino-1-(5-phospho-D-ribosyl)imidazole (N5-CAIR route): step 1/2. In terms of biological role, catalyzes the ATP-dependent conversion of 5-aminoimidazole ribonucleotide (AIR) and HCO(3)(-) to N5-carboxyaminoimidazole ribonucleotide (N5-CAIR). In Staphylococcus epidermidis (strain ATCC 12228 / FDA PCI 1200), this protein is N5-carboxyaminoimidazole ribonucleotide synthase.